The primary structure comprises 285 residues: Golgi to ER traffic protein 2 (285 aa).

Residues 1-10 show a composition bias toward basic and acidic residues; sequence MSELTEAEKR. Disordered stretches follow at residues 1-72 and 87-106; these read MSEL…KEDS and MQGQGTGKSTPQDSSTPDLL. Ser-2 is modified (N-acetylserine). Residues 2 to 148 are Cytoplasmic-facing; sequence SELTEAEKRR…LDYHDYLLNR (147 aa). Residues 11 to 20 show a composition bias toward basic residues; the sequence is RLLRERRQKK. Residues 24–42 are compositionally biased toward polar residues; that stretch reads GGASSRLNKITGQASSHLN. Position 45 is a phosphoserine (Ser-45). The segment covering 49–60 has biased composition (low complexity); sequence APSAAKTTPPAS. The segment covering 93–104 has biased composition (polar residues); it reads GKSTPQDSSTPD. Residues 149–169 traverse the membrane as a helical segment; it reads LKAWTILVKWVFFLLPYLYLI. Over 170–196 the chain is Lumenal; that stretch reads TRPNSSVWPAYAFTQSAWFAPLRNPSN. Asn-173 and Asn-196 each carry an N-linked (GlcNAc...) asparagine glycan. A helical transmembrane segment spans residues 197–216; the sequence is FTRIFATFEFLSISIYYQLL. Over 217–263 the chain is Cytoplasmic; that stretch reads KNVEHKSKIKNLQDTNKLVKLVSLVPEGVIPVANLKGKLITLLQYWD. Residues 264-284 form a helical membrane-spanning segment; that stretch reads LLSMLITDISFVLIVLGLLTY. Leu-285 is a topological domain (lumenal).

This sequence belongs to the GET2 family. Component of the Golgi to ER traffic (GET) complex, which is composed of GET1, GET2 and GET3. Within the complex, GET1 and GET2 form a heterotetramer which is stabilized by phosphatidylinositol binding and which binds to the GET3 homodimer.

Its subcellular location is the endoplasmic reticulum membrane. The protein localises to the golgi apparatus membrane. Functionally, required for the post-translational delivery of tail-anchored (TA) proteins to the endoplasmic reticulum. Together with GET1, acts as a membrane receptor for soluble GET3, which recognizes and selectively binds the transmembrane domain of TA proteins in the cytosol. The GET complex cooperates with the HDEL receptor ERD2 to mediate the ATP-dependent retrieval of resident ER proteins that contain a C-terminal H-D-E-L retention signal from the Golgi to the ER. Involved in DNA replication and DNA damage response and also in cell wall function. This is Golgi to ER traffic protein 2 from Saccharomyces cerevisiae (strain RM11-1a) (Baker's yeast).